Here is a 348-residue protein sequence, read N- to C-terminus: 5-deoxyribose 1-phosphate isomerase (348 aa).

Residues 49-51 (RGA), Arg-92, and Gln-199 each bind substrate. Asp-240 acts as the Proton donor in catalysis. 250 to 251 (NK) contacts substrate.

The protein belongs to the EIF-2B alpha/beta/delta subunits family. DrdI subfamily. Homodimer.

The catalysed reaction is 5-deoxy-alpha-D-ribose 1-phosphate = 5-deoxy-D-ribulose 1-phosphate. The enzyme catalyses 5-(methylsulfanyl)-alpha-D-ribose 1-phosphate = 5-(methylsulfanyl)-D-ribulose 1-phosphate. The protein operates within carbohydrate degradation. Functionally, catalyzes the isomerization of 5-deoxy-alpha-D-ribose 1-phosphate to 5-deoxy-D-ribulose 1-phosphate, as part of a 5-deoxyribose salvage pathway that recycles this toxic radical SAM enzyme by-product to mainstream metabolites. Also seems to be able to catalyze the conversion of methylthioribose-1-phosphate (MTR-1-P) into methylthioribulose-1-phosphate (MTRu-1-P). However this enzyme may not function in methionine salvage in B.thuringiensis since it exists a paralog (MtnA) present in the methionine salvage pathway cluster. In Bacillus thuringiensis serovar kurstaki (strain ATCC 35866 / NRRL B-4488 / HD73), this protein is 5-deoxyribose 1-phosphate isomerase.